The chain runs to 547 residues: Chaperonin GroEL 1 (547 aa).

Residues 30 to 33 (TLGP), K51, 87 to 91 (DGTTT), G415, and D495 each bind ATP.

This sequence belongs to the chaperonin (HSP60) family. As to quaternary structure, forms a cylinder of 14 subunits composed of two heptameric rings stacked back-to-back. Interacts with the co-chaperonin GroES.

The protein localises to the cytoplasm. It catalyses the reaction ATP + H2O + a folded polypeptide = ADP + phosphate + an unfolded polypeptide.. Its function is as follows. Together with its co-chaperonin GroES, plays an essential role in assisting protein folding. The GroEL-GroES system forms a nano-cage that allows encapsulation of the non-native substrate proteins and provides a physical environment optimized to promote and accelerate protein folding. In Rhizobium johnstonii (strain DSM 114642 / LMG 32736 / 3841) (Rhizobium leguminosarum bv. viciae), this protein is Chaperonin GroEL 1.